A 216-amino-acid chain; its full sequence is Uracil phosphoribosyltransferase (216 aa).

Residues arginine 85, arginine 110, and 135–143 (DPMVATGYS) each bind 5-phospho-alpha-D-ribose 1-diphosphate. Uracil is bound by residues isoleucine 200 and 205–207 (GDA). Residue aspartate 206 coordinates 5-phospho-alpha-D-ribose 1-diphosphate.

The protein belongs to the UPRTase family. The cofactor is Mg(2+).

The enzyme catalyses UMP + diphosphate = 5-phospho-alpha-D-ribose 1-diphosphate + uracil. The protein operates within pyrimidine metabolism; UMP biosynthesis via salvage pathway; UMP from uracil: step 1/1. Its activity is regulated as follows. Allosterically activated by GTP. Catalyzes the conversion of uracil and 5-phospho-alpha-D-ribose 1-diphosphate (PRPP) to UMP and diphosphate. This chain is Uracil phosphoribosyltransferase, found in Burkholderia cenocepacia (strain ATCC BAA-245 / DSM 16553 / LMG 16656 / NCTC 13227 / J2315 / CF5610) (Burkholderia cepacia (strain J2315)).